The sequence spans 1062 residues: MAPTNTKDSDTPGWLHRHGTSVLGSVARQACKQPIYTLVITALLATMTYTSLLEGSLYNANLTRLSNSHLNQLDVTDFLQGSRSLRLGKATAWQWETDDESMSDQEVRPSFFLDPVASHLALITLVFPTSENNPGISAVQESIISDLAAAQLVSRTPSVLSSTFRETSITLSVPYNNLEEVLRKTQNFPQPEAEHSWTLKNAGKCNSGPKLRLWLIDVLASFVGLIKHAQIIDIIIMLLAYLAMHLTFLSLFMSMRQLGSRFWLAYSVLLSGFFSLFFGLKVTTSSGVSTSMITLSECLPILVIIVGFEKPIRLTRAVLRAATESYLPAKPMARRSTPEAIEVAIMREGWRIVRDYAIEIAILAAGATSRVQGALPQFCFLAAWILLFDSLLLFTFYISVLCVKLEITRIRKHVEPRRALEDDDISTGNQDFDSRVFGCKVKAANISRFKFLMVGGFVLFNVLQLSSLTYGNVRVSDWMPYLSNLSNTLMPAPINPYRVARNGLDDIYVASRANNIETRVTVLPPIKYVLQSQSRHCRDNFAGPLCDTLRGRTLGCVLAWLEDPVISKWVIAALFLSLVLNSYLMKAARWNLRQSEVIPDSSATVSQTKDSSNKLAEKRTVDAMLQEGRVSLLEDEEIVNLCLRGKISAHALEKTMERHPTMSRLEAFTRAVKIRRTVVSRTPSTIDVSSSLEYSKAPFENYDYTLVHGACCENIIGYLPLPVGAAGPLVIDGRNYFIPMATTEGVLVASASRGCKAINAGGGAVTVINADGMTRGPCLAFSSVSRAAEAKQWIDSDEGKKILATAFNSTSRFARLQGLKSAQAGTYLYVRFKSTTGDAMGMNMISKGVEKALEVMKGHGFSDMSTISVTGNYCVDKKPAAINWIDGRGKSVVAEALIPADAVRSVLKTDVDALVELNTAKNLVGSAMAGSIGGFNVHASNLVAAVLLATGQDPAQNVESSSCITIMKNVNNNLHISVSMPCIEVGTIGGGTILEPQAAMLDLLGVRGAHATNPGDNARQLARIVAAAVLAGELSTCAALAAGHLVSAHMAHNRSKVAAKTG.

Topologically, residues 1-34 are cytoplasmic; sequence MAPTNTKDSDTPGWLHRHGTSVLGSVARQACKQP. The helical transmembrane segment at 35–55 threads the bilayer; it reads IYTLVITALLATMTYTSLLEG. Residues 56 to 230 lie on the Lumenal side of the membrane; the sequence is SLYNANLTRL…SFVGLIKHAQ (175 aa). Residue Asn61 is glycosylated (N-linked (GlcNAc...) asparagine). A helical membrane pass occupies residues 231–251; the sequence is IIDIIIMLLAYLAMHLTFLSL. An SSD domain is found at 233–403; the sequence is DIIIMLLAYL…FTFYISVLCV (171 aa). Topologically, residues 252 to 261 are cytoplasmic; sequence FMSMRQLGSR. Residues 262-282 traverse the membrane as a helical segment; the sequence is FWLAYSVLLSGFFSLFFGLKV. Residues 283-287 lie on the Lumenal side of the membrane; the sequence is TTSSG. The helical transmembrane segment at 288–308 threads the bilayer; the sequence is VSTSMITLSECLPILVIIVGF. The Cytoplasmic portion of the chain corresponds to 309–355; the sequence is EKPIRLTRAVLRAATESYLPAKPMARRSTPEAIEVAIMREGWRIVRD. A helical transmembrane segment spans residues 356–375; it reads YAIEIAILAAGATSRVQGAL. Residues 376 to 377 lie on the Lumenal side of the membrane; the sequence is PQ. The helical transmembrane segment at 378-398 threads the bilayer; it reads FCFLAAWILLFDSLLLFTFYI. Residues 399–450 lie on the Cytoplasmic side of the membrane; the sequence is SVLCVKLEITRIRKHVEPRRALEDDDISTGNQDFDSRVFGCKVKAANISRFK. A helical transmembrane segment spans residues 451–471; that stretch reads FLMVGGFVLFNVLQLSSLTYG. Residues 472 to 564 lie on the Lumenal side of the membrane; sequence NVRVSDWMPY…GCVLAWLEDP (93 aa). N-linked (GlcNAc...) asparagine glycosylation occurs at Asn484. A helical membrane pass occupies residues 565-585; sequence VISKWVIAALFLSLVLNSYLM. The Cytoplasmic segment spans residues 586–1062; that stretch reads KAARWNLRQS…NRSKVAAKTG (477 aa). The active-site Charge relay system is the Glu744. Residue 750 to 756 coordinates CoA; that stretch reads SASRGCK. NADP(+) is bound by residues 811-813 and 838-846; these read SRF and DAMGMNMIS. Lys877 (charge relay system) is an active-site residue. 906-908 provides a ligand contact to CoA; the sequence is VLK. Asp953 serves as the catalytic Charge relay system. CoA is bound at residue 1048-1049; sequence AH. The active-site Proton donor is His1049. An NADP(+)-binding site is contributed by 1053–1054; it reads NR.

It belongs to the HMG-CoA reductase family.

It is found in the endoplasmic reticulum membrane. It carries out the reaction (R)-mevalonate + 2 NADP(+) + CoA = (3S)-3-hydroxy-3-methylglutaryl-CoA + 2 NADPH + 2 H(+). Its pathway is metabolic intermediate biosynthesis; (R)-mevalonate biosynthesis; (R)-mevalonate from acetyl-CoA: step 3/3. Functionally, HMG-CoA reductase; part of the first module of ergosterol biosynthesis pathway that includes the early steps of the pathway, conserved across all eukaryotes, and which results in the formation of mevalonate from acetyl-coenzyme A (acetyl-CoA). Hmg1 and hmg2 catalyze the reduction of hydroxymethylglutaryl-CoA (HMG-CoA) to mevalonate. The first module starts with the action of the cytosolic acetyl-CoA acetyltransferase erg10B that catalyzes the formation of acetoacetyl-CoA. The hydroxymethylglutaryl-CoA synthases erg13A and erg13B then condense acetyl-CoA with acetoacetyl-CoA to form HMG-CoA. The rate-limiting step of the early module is the reduction to mevalonate by the 3-hydroxy-3-methylglutaryl-coenzyme A (HMG-CoA) reductases hmg1 and hmg2. Mevalonate is also a precursor for the extracellular siderophore triacetylfusarinine C (TAFC). The polypeptide is 3-hydroxy-3-methylglutaryl-coenzyme A reductase 2 (Aspergillus fumigatus (strain ATCC MYA-4609 / CBS 101355 / FGSC A1100 / Af293) (Neosartorya fumigata)).